The following is a 145-amino-acid chain: Small ribosomal subunit protein eS19 (145 aa).

Lys-23 carries the post-translational modification N6-acetyllysine. Position 67 is an omega-N-methylarginine (Arg-67). Lys-111 and Lys-115 each carry N6-acetyllysine. An N6-succinyllysine modification is found at Lys-143.

Belongs to the eukaryotic ribosomal protein eS19 family. Component of the small ribosomal subunit. Part of the small subunit (SSU) processome, composed of more than 70 proteins and the RNA chaperone small nucleolar RNA (snoRNA) U3. Interacts with RPS19BP1.

The protein localises to the cytoplasm. Its subcellular location is the nucleus. It localises to the nucleolus. Functionally, component of the small ribosomal subunit. The ribosome is a large ribonucleoprotein complex responsible for the synthesis of proteins in the cell. Required for pre-rRNA processing and maturation of 40S ribosomal subunits. Part of the small subunit (SSU) processome, first precursor of the small eukaryotic ribosomal subunit. During the assembly of the SSU processome in the nucleolus, many ribosome biogenesis factors, an RNA chaperone and ribosomal proteins associate with the nascent pre-rRNA and work in concert to generate RNA folding, modifications, rearrangements and cleavage as well as targeted degradation of pre-ribosomal RNA by the RNA exosome. In Rattus norvegicus (Rat), this protein is Small ribosomal subunit protein eS19 (Rps19).